Consider the following 422-residue polypeptide: Enolase (422 aa).

Gln162 lines the (2R)-2-phosphoglycerate pocket. The active-site Proton donor is Glu204. The Mg(2+) site is built by Asp241, Glu284, and Asp311. Residues Lys336, Arg365, Ser366, and Lys387 each contribute to the (2R)-2-phosphoglycerate site. Lys336 (proton acceptor) is an active-site residue.

The protein belongs to the enolase family. Requires Mg(2+) as cofactor.

It localises to the cytoplasm. The protein localises to the secreted. The protein resides in the cell surface. The catalysed reaction is (2R)-2-phosphoglycerate = phosphoenolpyruvate + H2O. The protein operates within carbohydrate degradation; glycolysis; pyruvate from D-glyceraldehyde 3-phosphate: step 4/5. Functionally, catalyzes the reversible conversion of 2-phosphoglycerate (2-PG) into phosphoenolpyruvate (PEP). It is essential for the degradation of carbohydrates via glycolysis. This chain is Enolase, found in Thermus thermophilus (strain ATCC 27634 / DSM 579 / HB8).